Consider the following 326-residue polypeptide: MTRYARIIGTGSYLPPKRVTNHELAAQLAEQGIETSDEWIVTRSGIRARHYAEPDVTCSDLAAKAAERAIEAAGIDRAEIDLILVATSTPDFVFPSAACLVQQKLGLSNHCAAFDLQAVCSGFVYGLATADKFIRAGGYRNALVIGAEVFSRILDFNDRTTCVLFGDGAGAVVLQASDEPGILSTALHADGSHADILCVPGNVAGGAIKGSAFLYMDGQAVFKLAVNVLDKVAREALALAEVESSQIDWLIPHQANIRIMQGTAKKLGLPGERMVVTVDEHGNTSAASIPLALDAAVRDGRIQKGHHVLLEGVGGGFTWGAALLRF.

Catalysis depends on residues Cys120 and His253. Residues Gln254–Arg258 are ACP-binding. Residue Asn283 is part of the active site.

This sequence belongs to the thiolase-like superfamily. FabH family. As to quaternary structure, homodimer.

It is found in the cytoplasm. The catalysed reaction is malonyl-[ACP] + acetyl-CoA + H(+) = 3-oxobutanoyl-[ACP] + CO2 + CoA. It participates in lipid metabolism; fatty acid biosynthesis. Functionally, catalyzes the condensation reaction of fatty acid synthesis by the addition to an acyl acceptor of two carbons from malonyl-ACP. Catalyzes the first condensation reaction which initiates fatty acid synthesis and may therefore play a role in governing the total rate of fatty acid production. Possesses both acetoacetyl-ACP synthase and acetyl transacylase activities. Its substrate specificity determines the biosynthesis of branched-chain and/or straight-chain of fatty acids. This chain is Beta-ketoacyl-[acyl-carrier-protein] synthase III, found in Ralstonia nicotianae (strain ATCC BAA-1114 / GMI1000) (Ralstonia solanacearum).